The following is a 265-amino-acid chain: Sulfur carrier protein FdhD (265 aa).

Catalysis depends on C107, which acts as the Cysteine persulfide intermediate.

It belongs to the FdhD family.

It is found in the cytoplasm. Functionally, required for formate dehydrogenase (FDH) activity. Acts as a sulfur carrier protein that transfers sulfur from IscS to the molybdenum cofactor prior to its insertion into FDH. This is Sulfur carrier protein FdhD from Staphylococcus aureus (strain MRSA252).